The primary structure comprises 756 residues: NADP-dependent malic enzyme (756 aa).

The malic enzyme stretch occupies residues 1–428 (MTEQLRQAAL…KLTQFVYKTS (428 aa)). Catalysis depends on Tyr39, which acts as the Proton donor. The active-site Proton acceptor is Lys94. Positions 136, 137, and 162 each coordinate a divalent metal cation. Residues 195-198 (AGAA), Asn288, and Asn320 each bind NADP(+). A phosphate acetyltransferase region spans residues 429–756 (LFMRPIFSQA…AYAAVKAQQE (328 aa)).

This sequence in the N-terminal section; belongs to the malic enzymes family. The protein in the C-terminal section; belongs to the phosphate acetyltransferase and butyryltransferase family. It depends on Mg(2+) as a cofactor. Requires Mn(2+) as cofactor.

It carries out the reaction (S)-malate + NADP(+) = pyruvate + CO2 + NADPH. The catalysed reaction is oxaloacetate + H(+) = pyruvate + CO2. The sequence is that of NADP-dependent malic enzyme (maeB) from Haemophilus influenzae (strain ATCC 51907 / DSM 11121 / KW20 / Rd).